The chain runs to 366 residues: S-adenosylmethionine:tRNA ribosyltransferase-isomerase (366 aa).

This sequence belongs to the QueA family. In terms of assembly, monomer.

It is found in the cytoplasm. The catalysed reaction is 7-aminomethyl-7-carbaguanosine(34) in tRNA + S-adenosyl-L-methionine = epoxyqueuosine(34) in tRNA + adenine + L-methionine + 2 H(+). It functions in the pathway tRNA modification; tRNA-queuosine biosynthesis. In terms of biological role, transfers and isomerizes the ribose moiety from AdoMet to the 7-aminomethyl group of 7-deazaguanine (preQ1-tRNA) to give epoxyqueuosine (oQ-tRNA). This chain is S-adenosylmethionine:tRNA ribosyltransferase-isomerase, found in Parasynechococcus marenigrum (strain WH8102).